Here is a 267-residue protein sequence, read N- to C-terminus: MILWRIVRPGAAMAYVQTGLVLIAEAMDTQQDSLKPRPAMRAAAFSVHVFTAFGAAIALLAMLEAVREHWAAMFQWLGVALIIDAIDGPIARRLDVKNVQPNWSGDVLDLVVDFVTYVFVPAYAIVASGLLLPVAAPLLGVAIIVTSALYFADLRMKADDNHFRGFPALWNAAAFYLFLLHWPPLWSTLLVAALVVLTFVPFHVLHPVRVVRLRWLTMSLIGIWAVLSLYTLDMDFRVGPGVTLALCAIALWISFSDALIRFARSFA.

The Cytoplasmic segment spans residues 1–42 (MILWRIVRPGAAMAYVQTGLVLIAEAMDTQQDSLKPRPAMRA). The helical transmembrane segment at 43–63 (AAFSVHVFTAFGAAIALLAML) threads the bilayer. At 64–69 (EAVREH) the chain is on the periplasmic side. The helical transmembrane segment at 70–90 (WAAMFQWLGVALIIDAIDGPI) threads the bilayer. The Cytoplasmic segment spans residues 91-102 (ARRLDVKNVQPN). Residues 103-123 (WSGDVLDLVVDFVTYVFVPAY) form a helical membrane-spanning segment. Ala124 is a topological domain (periplasmic). A helical transmembrane segment spans residues 125-145 (IVASGLLLPVAAPLLGVAIIV). The Cytoplasmic portion of the chain corresponds to 146–162 (TSALYFADLRMKADDNH). Residues 163–183 (FRGFPALWNAAAFYLFLLHWP) traverse the membrane as a helical segment. Position 184 (Pro184) is a topological domain, periplasmic. Residues 185-205 (LWSTLLVAALVVLTFVPFHVL) traverse the membrane as a helical segment. At 206–215 (HPVRVVRLRW) the chain is on the cytoplasmic side. The chain crosses the membrane as a helical span at residues 216-236 (LTMSLIGIWAVLSLYTLDMDF). The Periplasmic segment spans residues 237–239 (RVG). A helical membrane pass occupies residues 240–260 (PGVTLALCAIALWISFSDALI). Residues 261 to 267 (RFARSFA) lie on the Cytoplasmic side of the membrane.

It belongs to the CDP-alcohol phosphatidyltransferase class-I family. It depends on Mn(2+) as a cofactor.

The protein resides in the cell inner membrane. It catalyses the reaction a CDP-1,2-diacyl-sn-glycerol + choline = a 1,2-diacyl-sn-glycero-3-phosphocholine + CMP + H(+). Its function is as follows. Condenses choline with CDP-diglyceride to produce phosphatidylcholine and CMP. The polypeptide is Phosphatidylcholine synthase (Bradyrhizobium diazoefficiens (strain JCM 10833 / BCRC 13528 / IAM 13628 / NBRC 14792 / USDA 110)).